The sequence spans 359 residues: DNA replication and repair protein RecF (359 aa).

Residue 30–37 (GPNGSGKT) participates in ATP binding.

This sequence belongs to the RecF family.

It is found in the cytoplasm. Its function is as follows. The RecF protein is involved in DNA metabolism; it is required for DNA replication and normal SOS inducibility. RecF binds preferentially to single-stranded, linear DNA. It also seems to bind ATP. The protein is DNA replication and repair protein RecF of Vibrio parahaemolyticus serotype O3:K6 (strain RIMD 2210633).